A 306-amino-acid polypeptide reads, in one-letter code: MEILPVGEESLGVRSMCLYVETRDVRILFDAGVSLAPRRFGLPPHPRELERARSVRGEIVRLAQQADIITVSHYHRDHFTPWYPSVYMATDGETYKKVYGGKKVLMKSPADLNWSQRRRHYGLAKALQEAGAKAVYADGGEWRIGGTVIRASPPLWHGPAGSKTGRVIAFAVSDGEERLVFVPDVEGPVEPEPVAFLEEVKPTVVVVGGPPTYLGWELERALQRLTEIIDIGPHTLVLAHHLLRDLAWREKIEAVLQRAEKRGVRVATYAGLLGRKDELLEAMRRDLYAAEPAAAQPAEEGIDEGD.

Belongs to the UPF0282 family.

This is UPF0282 protein Pars_1056 from Pyrobaculum arsenaticum (strain DSM 13514 / JCM 11321 / PZ6).